A 2359-amino-acid polypeptide reads, in one-letter code: Pre-mRNA-processing-splicing factor 8B (2359 aa).

The tract at residues 1-50 is disordered; that stretch reads MWNIDGTSLAPPGTDGSRMQTPSHPADHPSYTAPSNRNTPTVPTPEDAEA. The span at 32–41 shows a compositional bias: polar residues; the sequence is TAPSNRNTPT. Positions 2129 to 2260 constitute an MPN domain; the sequence is TYIMPKNILK…LTSYKLTQAG (132 aa).

It localises to the nucleus. Functionally, functions as a scaffold that mediates the ordered assembly of spliceosomal proteins and snRNAs. Required for the assembly of the U4/U6-U5 tri-snRNP complex. The protein is Pre-mRNA-processing-splicing factor 8B of Arabidopsis thaliana (Mouse-ear cress).